The following is a 133-amino-acid chain: Small ribosomal subunit protein uS19 (133 aa).

The protein belongs to the universal ribosomal protein uS19 family.

In terms of biological role, protein S19 forms a complex with S13 that binds strongly to the 16S ribosomal RNA. The sequence is that of Small ribosomal subunit protein uS19 (rps19) from Archaeoglobus fulgidus (strain ATCC 49558 / DSM 4304 / JCM 9628 / NBRC 100126 / VC-16).